The chain runs to 121 residues: ATP synthase epsilon chain (121 aa).

This sequence belongs to the ATPase epsilon chain family. As to quaternary structure, F-type ATPases have 2 components, CF(1) - the catalytic core - and CF(0) - the membrane proton channel. CF(1) has five subunits: alpha(3), beta(3), gamma(1), delta(1), epsilon(1). CF(0) has three main subunits: a, b and c.

The protein resides in the cell membrane. Its function is as follows. Produces ATP from ADP in the presence of a proton gradient across the membrane. This Mycobacterium leprae (strain Br4923) protein is ATP synthase epsilon chain.